The sequence spans 102 residues: Large ribosomal subunit protein bL21 (102 aa).

The protein belongs to the bacterial ribosomal protein bL21 family. In terms of assembly, part of the 50S ribosomal subunit. Contacts protein L20.

This protein binds to 23S rRNA in the presence of protein L20. This Marinomonas sp. (strain MWYL1) protein is Large ribosomal subunit protein bL21.